We begin with the raw amino-acid sequence, 245 residues long: 1-(5-phosphoribosyl)-5-[(5-phosphoribosylamino)methylideneamino] imidazole-4-carboxamide isomerase (245 aa).

Aspartate 7 functions as the Proton acceptor in the catalytic mechanism. The active-site Proton donor is the aspartate 129.

This sequence belongs to the HisA/HisF family.

It localises to the cytoplasm. It catalyses the reaction 1-(5-phospho-beta-D-ribosyl)-5-[(5-phospho-beta-D-ribosylamino)methylideneamino]imidazole-4-carboxamide = 5-[(5-phospho-1-deoxy-D-ribulos-1-ylimino)methylamino]-1-(5-phospho-beta-D-ribosyl)imidazole-4-carboxamide. The protein operates within amino-acid biosynthesis; L-histidine biosynthesis; L-histidine from 5-phospho-alpha-D-ribose 1-diphosphate: step 4/9. The protein is 1-(5-phosphoribosyl)-5-[(5-phosphoribosylamino)methylideneamino] imidazole-4-carboxamide isomerase of Salmonella agona (strain SL483).